A 305-amino-acid chain; its full sequence is UDP-3-O-acyl-N-acetylglucosamine deacetylase (305 aa).

Zn(2+)-binding residues include histidine 78, histidine 237, and aspartate 241. Residue histidine 264 is the Proton donor of the active site.

It belongs to the LpxC family. Zn(2+) serves as cofactor.

It carries out the reaction a UDP-3-O-[(3R)-3-hydroxyacyl]-N-acetyl-alpha-D-glucosamine + H2O = a UDP-3-O-[(3R)-3-hydroxyacyl]-alpha-D-glucosamine + acetate. The protein operates within glycolipid biosynthesis; lipid IV(A) biosynthesis; lipid IV(A) from (3R)-3-hydroxytetradecanoyl-[acyl-carrier-protein] and UDP-N-acetyl-alpha-D-glucosamine: step 2/6. Catalyzes the hydrolysis of UDP-3-O-myristoyl-N-acetylglucosamine to form UDP-3-O-myristoylglucosamine and acetate, the committed step in lipid A biosynthesis. The chain is UDP-3-O-acyl-N-acetylglucosamine deacetylase from Dechloromonas aromatica (strain RCB).